The chain runs to 359 residues: Histidinol-phosphate aminotransferase (359 aa).

K217 bears the N6-(pyridoxal phosphate)lysine mark.

The protein belongs to the class-II pyridoxal-phosphate-dependent aminotransferase family. Histidinol-phosphate aminotransferase subfamily. As to quaternary structure, homodimer. Pyridoxal 5'-phosphate serves as cofactor.

The enzyme catalyses L-histidinol phosphate + 2-oxoglutarate = 3-(imidazol-4-yl)-2-oxopropyl phosphate + L-glutamate. It participates in amino-acid biosynthesis; L-histidine biosynthesis; L-histidine from 5-phospho-alpha-D-ribose 1-diphosphate: step 7/9. The protein is Histidinol-phosphate aminotransferase of Salmonella arizonae (strain ATCC BAA-731 / CDC346-86 / RSK2980).